A 257-amino-acid polypeptide reads, in one-letter code: Imidazole glycerol phosphate synthase subunit HisF (257 aa).

Catalysis depends on residues D11 and D130.

Belongs to the HisA/HisF family. As to quaternary structure, heterodimer of HisH and HisF.

It is found in the cytoplasm. It carries out the reaction 5-[(5-phospho-1-deoxy-D-ribulos-1-ylimino)methylamino]-1-(5-phospho-beta-D-ribosyl)imidazole-4-carboxamide + L-glutamine = D-erythro-1-(imidazol-4-yl)glycerol 3-phosphate + 5-amino-1-(5-phospho-beta-D-ribosyl)imidazole-4-carboxamide + L-glutamate + H(+). It participates in amino-acid biosynthesis; L-histidine biosynthesis; L-histidine from 5-phospho-alpha-D-ribose 1-diphosphate: step 5/9. Its function is as follows. IGPS catalyzes the conversion of PRFAR and glutamine to IGP, AICAR and glutamate. The HisF subunit catalyzes the cyclization activity that produces IGP and AICAR from PRFAR using the ammonia provided by the HisH subunit. The sequence is that of Imidazole glycerol phosphate synthase subunit HisF from Xylella fastidiosa (strain M23).